Consider the following 492-residue polypeptide: Glycylpeptide N-tetradecanoyltransferase 2 (492 aa).

The tract at residues 1 to 77 (MAEDSESAAS…SASDSQEIKN (77 aa)) is disordered. The segment covering 15–32 (ELDDQDTCGIDGDNEEEN) has biased composition (acidic residues). A compositionally biased stretch (basic residues) spans 46–57 (KKKKKKQKRKKE). Residues 61-72 (SGGTKSDSASDS) show a composition bias toward polar residues. Tetradecanoyl-CoA is bound by residues His111, Trp116, Leu244, Val246, Ser252, Arg254, Val255, and Ala256.

The protein belongs to the NMT family.

Its subcellular location is the cytoplasm. The protein resides in the membrane. The catalysed reaction is N-terminal glycyl-[protein] + tetradecanoyl-CoA = N-tetradecanoylglycyl-[protein] + CoA + H(+). It carries out the reaction N-terminal glycyl-L-lysyl-[protein] + tetradecanoyl-CoA = N-terminal glycyl-(N(6)-tetradecanoyl)-L-lysyl-[protein] + CoA + H(+). Functionally, adds a myristoyl group to the N-terminal glycine residue of certain cellular and viral proteins. Also able to mediate N-terminal lysine myristoylation of proteins. The sequence is that of Glycylpeptide N-tetradecanoyltransferase 2 from Danio rerio (Zebrafish).